The chain runs to 322 residues: Biotin synthase (322 aa).

Positions 39–266 (NQVQISSLLN…KSVVRLSAGR (228 aa)) constitute a Radical SAM core domain. Residues Cys54, Cys58, and Cys61 each contribute to the [4Fe-4S] cluster site. Residues Cys98, Cys129, Cys189, and Arg261 each coordinate [2Fe-2S] cluster.

The protein belongs to the radical SAM superfamily. Biotin synthase family. Homodimer. The cofactor is [4Fe-4S] cluster. [2Fe-2S] cluster serves as cofactor.

The catalysed reaction is (4R,5S)-dethiobiotin + (sulfur carrier)-SH + 2 reduced [2Fe-2S]-[ferredoxin] + 2 S-adenosyl-L-methionine = (sulfur carrier)-H + biotin + 2 5'-deoxyadenosine + 2 L-methionine + 2 oxidized [2Fe-2S]-[ferredoxin]. It functions in the pathway cofactor biosynthesis; biotin biosynthesis; biotin from 7,8-diaminononanoate: step 2/2. Its function is as follows. Catalyzes the conversion of dethiobiotin (DTB) to biotin by the insertion of a sulfur atom into dethiobiotin via a radical-based mechanism. This is Biotin synthase from Vesicomyosocius okutanii subsp. Calyptogena okutanii (strain HA).